The sequence spans 105 residues: U2-lycotoxin-Ls1b (105 aa).

A signal peptide spans 1–17; sequence MIKYVLISALLVVAVYS. Residues 18–41 constitute a propeptide that is removed on maturation; that stretch reads FTIEDNEDALLEEAEDELDTEEER. 4 disulfides stabilise this stretch: Cys-51–Cys-67, Cys-58–Cys-97, Cys-60–Cys-83, and Cys-69–Cys-81.

The protein belongs to the neurotoxin 04 (omega-agtx) family. 01 (type I omega-agtx) subfamily. As to expression, expressed by the venom gland.

It localises to the secreted. Functionally, insecticidal to house crickets. It induces an excitatory slow-onset impact that leads to irreversible spastic paralysis. It also modifies human voltage-gated potassium channel Kv1.5/KCNA5. Most likely, it binds to the voltage-sensing domain of the channel, suggesting it does not block the pore but prevents its opening at physiological membrane potentials. The recombinant peptide binds to the channel in an irreversible manner and slows down the hKv1.5 current activation kinetics. It is not toxic to mice, when intracranially injected (at 0.5 ug/g mouse). The chain is U2-lycotoxin-Ls1b from Lycosa singoriensis (Wolf spider).